Here is a 243-residue protein sequence, read N- to C-terminus: ATP-dependent dethiobiotin synthetase BioD (243 aa).

12 to 17 (DVGKTF) is an ATP binding site. Thr16 provides a ligand contact to Mg(2+). Lys37 is a catalytic residue. A substrate-binding site is contributed by Ser41. Residues Asp54, 115–118 (EGCG), and 179–180 (NM) each bind ATP. Mg(2+) contacts are provided by Asp54 and Glu115.

This sequence belongs to the dethiobiotin synthetase family. Homodimer. Mg(2+) serves as cofactor.

The protein localises to the cytoplasm. It catalyses the reaction (7R,8S)-7,8-diammoniononanoate + CO2 + ATP = (4R,5S)-dethiobiotin + ADP + phosphate + 3 H(+). Its pathway is cofactor biosynthesis; biotin biosynthesis; biotin from 7,8-diaminononanoate: step 1/2. Its function is as follows. Catalyzes a mechanistically unusual reaction, the ATP-dependent insertion of CO2 between the N7 and N8 nitrogen atoms of 7,8-diaminopelargonic acid (DAPA, also called 7,8-diammoniononanoate) to form a ureido ring. The sequence is that of ATP-dependent dethiobiotin synthetase BioD from Caldicellulosiruptor bescii (strain ATCC BAA-1888 / DSM 6725 / KCTC 15123 / Z-1320) (Anaerocellum thermophilum).